The following is a 276-amino-acid chain: Undecaprenyl-diphosphatase (276 aa).

A run of 8 helical transmembrane segments spans residues 1–21 (MSWL…FLPV), 39–59 (AGAS…LVYF), 84–104 (YWLG…GLLF), 115–135 (LWLV…AEYA), 159–179 (LALV…LFLG), 190–210 (FLLA…DAFA), 222–242 (QLLV…AWFL), and 253–273 (FVGY…TGVV).

This sequence belongs to the UppP family.

It localises to the cell membrane. The catalysed reaction is di-trans,octa-cis-undecaprenyl diphosphate + H2O = di-trans,octa-cis-undecaprenyl phosphate + phosphate + H(+). In terms of biological role, catalyzes the dephosphorylation of undecaprenyl diphosphate (UPP). Confers resistance to bacitracin. The polypeptide is Undecaprenyl-diphosphatase (Mycolicibacterium gilvum (strain PYR-GCK) (Mycobacterium gilvum (strain PYR-GCK))).